The sequence spans 281 residues: NADPH-dependent 7-cyano-7-deazaguanine reductase (281 aa).

88-90 (IES) is a binding site for substrate. An NADPH-binding site is contributed by 90-91 (SK). The active-site Thioimide intermediate is the cysteine 189. The active-site Proton donor is the aspartate 196. 228–229 (HE) lines the substrate pocket. Residue 257-258 (RG) participates in NADPH binding.

The protein belongs to the GTP cyclohydrolase I family. QueF type 2 subfamily. In terms of assembly, homodimer.

Its subcellular location is the cytoplasm. It catalyses the reaction 7-aminomethyl-7-carbaguanine + 2 NADP(+) = 7-cyano-7-deazaguanine + 2 NADPH + 3 H(+). It functions in the pathway tRNA modification; tRNA-queuosine biosynthesis. Catalyzes the NADPH-dependent reduction of 7-cyano-7-deazaguanine (preQ0) to 7-aminomethyl-7-deazaguanine (preQ1). This is NADPH-dependent 7-cyano-7-deazaguanine reductase from Yersinia enterocolitica serotype O:8 / biotype 1B (strain NCTC 13174 / 8081).